The primary structure comprises 156 residues: Small ribosomal subunit protein uS7 (156 aa).

The protein belongs to the universal ribosomal protein uS7 family. As to quaternary structure, part of the 30S ribosomal subunit. Contacts proteins S9 and S11.

In terms of biological role, one of the primary rRNA binding proteins, it binds directly to 16S rRNA where it nucleates assembly of the head domain of the 30S subunit. Is located at the subunit interface close to the decoding center, probably blocks exit of the E-site tRNA. The protein is Small ribosomal subunit protein uS7 of Afipia carboxidovorans (strain ATCC 49405 / DSM 1227 / KCTC 32145 / OM5) (Oligotropha carboxidovorans).